The chain runs to 744 residues: Tripartite motif-containing protein 2 (744 aa).

A Phosphoserine modification is found at serine 10. The RING-type zinc finger occupies 23 to 64; that stretch reads CSICLERYKNPKVLPCLHTFCERCLQNYIPAHSLTLSCPVCR. A B box-type zinc finger spans residues 113 to 154; that stretch reads GKPLSCPNHDGNVMEFYCQSCETAMCRECTEGEHAEHPTVPL. Residues cysteine 118, histidine 121, cysteine 141, and histidine 146 each contribute to the Zn(2+) site. The stretch at 320 to 421 is one Filamin repeat; that stretch reads TTNAVASETV…IRGSPFKLKV (102 aa). Residue threonine 371 is modified to Phosphothreonine. Phosphoserine is present on residues serine 375, serine 424, and serine 428. Positions 432–462 are disordered; the sequence is EGVKRRVKSPGSGHVKQKAVKRPASMYSTGK. 6 NHL repeats span residues 473–516, 520–563, 564–605, 609–652, 656–699, and 700–743; these read IFRV…FSND, KSRF…FSND, GKFK…FQPN, VTRF…FNQE, MLKF…FDGS, and GSFL…YRYL.

This sequence belongs to the TRIM/RBCC family. In terms of assembly, forms homooligomers. Interacts with TRIM3; this interaction reduces TRIM2 activity. Interacts with myosin V; myosin V may not be a substrate for ubiquitination. Interacts with NEFL. Interacts with phosphorylated BCL2L11. Interacts with SIRPA. In terms of processing, RING-type zinc finger-dependent and UBE2D1-dependent autoubiquitination.

It catalyses the reaction S-ubiquitinyl-[E2 ubiquitin-conjugating enzyme]-L-cysteine + [acceptor protein]-L-lysine = [E2 ubiquitin-conjugating enzyme]-L-cysteine + N(6)-ubiquitinyl-[acceptor protein]-L-lysine.. It participates in protein modification; protein ubiquitination. In terms of biological role, UBE2D1-dependent E3 ubiquitin-protein ligase that mediates the ubiquitination of NEFL and of phosphorylated BCL2L11. Plays a neuroprotective function. May play a role in neuronal rapid ischemic tolerance. Plays a role in antiviral immunity and limits New World arenavirus infection independently of its ubiquitin ligase activity. This Rattus norvegicus (Rat) protein is Tripartite motif-containing protein 2 (Trim2).